Reading from the N-terminus, the 129-residue chain is Small ribosomal subunit protein uS11 (129 aa).

This sequence belongs to the universal ribosomal protein uS11 family. Part of the 30S ribosomal subunit. Interacts with proteins S7 and S18. Binds to IF-3.

Located on the platform of the 30S subunit, it bridges several disparate RNA helices of the 16S rRNA. Forms part of the Shine-Dalgarno cleft in the 70S ribosome. The sequence is that of Small ribosomal subunit protein uS11 from Marinobacter nauticus (strain ATCC 700491 / DSM 11845 / VT8) (Marinobacter aquaeolei).